The primary structure comprises 336 residues: 4-hydroxy-2-oxovalerate aldolase (336 aa).

In terms of domain architecture, Pyruvate carboxyltransferase spans 4–254 (PRLTDTTLRD…NPGLDVLALM (251 aa)). 12–13 (RD) provides a ligand contact to substrate. D13 contacts Mn(2+). Catalysis depends on H16, which acts as the Proton acceptor. S166 and H193 together coordinate substrate. Positions 193 and 195 each coordinate Mn(2+). Y284 is a binding site for substrate.

The protein belongs to the 4-hydroxy-2-oxovalerate aldolase family.

It carries out the reaction (S)-4-hydroxy-2-oxopentanoate = acetaldehyde + pyruvate. This Roseiflexus castenholzii (strain DSM 13941 / HLO8) protein is 4-hydroxy-2-oxovalerate aldolase.